The following is a 314-amino-acid chain: Olfactory receptor 51I1 (314 aa).

Topologically, residues 1–27 (MLGLNGTPFQPATLQLTGIPGIQTGLT) are extracellular. The chain crosses the membrane as a helical span at residues 28 to 48 (WVALIFCILYMISIVGNLSIL). Topologically, residues 49–56 (TLVFWEPA) are cytoplasmic. A helical transmembrane segment spans residues 57-77 (LHQPMYYFLSMLALNDLGVSF). Topologically, residues 78-101 (STLPTVISTFCFNYNHVAFNACLV) are extracellular. A disulfide bridge links C99 with C191. A helical membrane pass occupies residues 102–122 (QMFFIHTFSFMESGILLAMSL). The Cytoplasmic portion of the chain corresponds to 123-141 (DRFVAICYPLRYVTVLTHN). Residues 142–162 (RILAMGLGILTKSFTTLFPFP) traverse the membrane as a helical segment. Topologically, residues 163–198 (FVVKRLPFCKGNVLHHSYCLHPDLMKVACGDIHVNN) are extracellular. A helical transmembrane segment spans residues 199 to 219 (IYGLLVIIFTYGMDSTFILLS). Over 220 to 239 (YALILRAMLVIISQEQRLKA) the chain is Cytoplasmic. Residues 240 to 260 (LNTCMSHICAVLAFYVPIIAV) traverse the membrane as a helical segment. Residues 261-275 (SMIHRFWKSAPPVVH) are Extracellular-facing. A helical membrane pass occupies residues 276-296 (VMMSNVYLFVPPMLNPIIYSV). Residues 297-314 (KTKEIRKGILKFFHKSQA) lie on the Cytoplasmic side of the membrane.

This sequence belongs to the G-protein coupled receptor 1 family.

The protein resides in the cell membrane. Functionally, odorant receptor. This chain is Olfactory receptor 51I1 (OR51I1), found in Homo sapiens (Human).